A 440-amino-acid polypeptide reads, in one-letter code: Gap junction alpha-8 protein (440 aa).

Residues 2–12 lie within the membrane without spanning it; that stretch reads GDWSFLGNILE. Over 13–21 the chain is Cytoplasmic; it reads EVNEHSTVI. The chain crosses the membrane as a helical span at residues 22 to 42; sequence GRVWLTVLFIFRILILGTAAE. The Extracellular segment spans residues 43 to 71; the sequence is FVWGDEQSDFVCNTQQPGCENVCYDEAFP. Disulfide bonds link Cys54/Cys201, Cys61/Cys195, and Cys65/Cys190. A helical transmembrane segment spans residues 72–92; sequence ISHIRLWVLQIIFVSTPSLMY. The Cytoplasmic portion of the chain corresponds to 93–161; the sequence is VGHAVHHVRM…GTLLRTYVCH (69 aa). The segment at 111 to 143 is disordered; it reads AEELCQQSRSNGGERVPIAPDQASIRKSSSSSK. A helical transmembrane segment spans residues 162 to 182; sequence IIFKTLFEVGFIVGHYFLYGF. The Extracellular portion of the chain corresponds to 183–210; sequence RILPLYRCSRWPCPNVVDCFVSRPTEKT. Residues 211–231 form a helical membrane-spanning segment; that stretch reads IFILFMLSVAFVSLFLNIMEM. Residues 232–440 are Cytoplasmic-facing; sequence SHLGMKGIRS…SRARSDDLTI (209 aa). Positions 334–440 are disordered; it reads GAQEVEREEQ…SRARSDDLTI (107 aa). Composition is skewed to basic and acidic residues over residues 353–364 and 375–399; these read VGEKKQEAEKVA and DGEK…EKVT. Residues 423–432 show a composition bias toward low complexity; sequence LSRLSKASSR.

This sequence belongs to the connexin family. Alpha-type (group II) subfamily. In terms of assembly, a hemichannel or connexon is composed of a hexamer of connexins. A functional gap junction is formed by the apposition of two hemichannels. Forms heteromeric channels with GJA3. In terms of tissue distribution, detected in eye lens (at protein level).

It is found in the cell membrane. The protein localises to the cell junction. It localises to the gap junction. Its function is as follows. Structural component of eye lens gap junctions. Gap junctions are dodecameric channels that connect the cytoplasm of adjoining cells. They are formed by the docking of two hexameric hemichannels, one from each cell membrane. Small molecules and ions diffuse from one cell to a neighboring cell via the central pore. In Rattus norvegicus (Rat), this protein is Gap junction alpha-8 protein (Gja8).